The following is a 162-amino-acid chain: SsrA-binding protein (162 aa).

Basic and acidic residues predominate over residues 137-154 (HDKREDTKAREWDREKAR). Residues 137-162 (HDKREDTKAREWDREKARIMKNKHRG) are disordered.

This sequence belongs to the SmpB family.

It localises to the cytoplasm. Its function is as follows. Required for rescue of stalled ribosomes mediated by trans-translation. Binds to transfer-messenger RNA (tmRNA), required for stable association of tmRNA with ribosomes. tmRNA and SmpB together mimic tRNA shape, replacing the anticodon stem-loop with SmpB. tmRNA is encoded by the ssrA gene; the 2 termini fold to resemble tRNA(Ala) and it encodes a 'tag peptide', a short internal open reading frame. During trans-translation Ala-aminoacylated tmRNA acts like a tRNA, entering the A-site of stalled ribosomes, displacing the stalled mRNA. The ribosome then switches to translate the ORF on the tmRNA; the nascent peptide is terminated with the 'tag peptide' encoded by the tmRNA and targeted for degradation. The ribosome is freed to recommence translation, which seems to be the essential function of trans-translation. The polypeptide is SsrA-binding protein (Aeromonas hydrophila subsp. hydrophila (strain ATCC 7966 / DSM 30187 / BCRC 13018 / CCUG 14551 / JCM 1027 / KCTC 2358 / NCIMB 9240 / NCTC 8049)).